The chain runs to 324 residues: Acetyl-coenzyme A carboxylase carboxyl transferase subunit alpha (324 aa).

The CoA carboxyltransferase C-terminal domain maps to 44 to 298; sequence RFQDKLTKLQ…RKELIKQLNI (255 aa).

Belongs to the AccA family. Acetyl-CoA carboxylase is a heterohexamer composed of biotin carboxyl carrier protein (accB), biotin carboxylase (accC) and two subunits each of ACCase subunit alpha (accA) and ACCase subunit beta (accD).

It is found in the plastid. It localises to the chloroplast. The catalysed reaction is N(6)-carboxybiotinyl-L-lysyl-[protein] + acetyl-CoA = N(6)-biotinyl-L-lysyl-[protein] + malonyl-CoA. It functions in the pathway lipid metabolism; malonyl-CoA biosynthesis; malonyl-CoA from acetyl-CoA: step 1/1. Functionally, component of the acetyl coenzyme A carboxylase (ACC) complex. First, biotin carboxylase catalyzes the carboxylation of biotin on its carrier protein (BCCP) and then the CO(2) group is transferred by the carboxyltransferase to acetyl-CoA to form malonyl-CoA. This Porphyra purpurea (Red seaweed) protein is Acetyl-coenzyme A carboxylase carboxyl transferase subunit alpha.